Consider the following 740-residue polypeptide: 1,4-alpha-glucan branching enzyme GlgB (740 aa).

Catalysis depends on Asp-409, which acts as the Nucleophile. Glu-462 serves as the catalytic Proton donor.

This sequence belongs to the glycosyl hydrolase 13 family. GlgB subfamily. Monomer.

The catalysed reaction is Transfers a segment of a (1-&gt;4)-alpha-D-glucan chain to a primary hydroxy group in a similar glucan chain.. It participates in glycan biosynthesis; glycogen biosynthesis. Functionally, catalyzes the formation of the alpha-1,6-glucosidic linkages in glycogen by scission of a 1,4-alpha-linked oligosaccharide from growing alpha-1,4-glucan chains and the subsequent attachment of the oligosaccharide to the alpha-1,6 position. The polypeptide is 1,4-alpha-glucan branching enzyme GlgB (Methylococcus capsulatus (strain ATCC 33009 / NCIMB 11132 / Bath)).